The following is a 359-amino-acid chain: Peptide chain release factor 1 (359 aa).

Gln-235 is modified (N5-methylglutamine). The segment at 280-306 (AERQRADSERSADRKSQVGSGDRSERI) is disordered.

Belongs to the prokaryotic/mitochondrial release factor family. Post-translationally, methylated by PrmC. Methylation increases the termination efficiency of RF1.

It is found in the cytoplasm. In terms of biological role, peptide chain release factor 1 directs the termination of translation in response to the peptide chain termination codons UAG and UAA. The protein is Peptide chain release factor 1 of Rhizobium leguminosarum bv. trifolii (strain WSM2304).